The chain runs to 146 residues: Ferredoxin-thioredoxin reductase catalytic chain, chloroplastic (146 aa).

The N-terminal 31 residues, Met-1–Arg-31, are a transit peptide targeting the chloroplast. A [4Fe-4S] cluster-binding site is contributed by Cys-85. Catalysis depends on Cys-87, which acts as the Nucleophile. Cys-87 and Cys-117 are joined by a disulfide. The [4Fe-4S] cluster site is built by Cys-104, Cys-106, and Cys-115.

This sequence belongs to the ferredoxin thioredoxin reductase beta subunit family. Heterodimer of subunit A (variable subunit) and subunit B (catalytic subunit). Heterodimeric FTR forms a complex with ferredoxin and thioredoxin. [4Fe-4S] cluster serves as cofactor.

It is found in the plastid. Its subcellular location is the chloroplast. It catalyses the reaction [thioredoxin]-disulfide + 2 reduced [2Fe-2S]-[ferredoxin] + 2 H(+) = [thioredoxin]-dithiol + 2 oxidized [2Fe-2S]-[ferredoxin]. Catalytic subunit of the ferredoxin-thioredoxin reductase (FTR), which catalyzes the two-electron reduction of thioredoxins by the electrons provided by reduced ferredoxin. The polypeptide is Ferredoxin-thioredoxin reductase catalytic chain, chloroplastic (Arabidopsis thaliana (Mouse-ear cress)).